The chain runs to 147 residues: Small ribosomal subunit protein bS6 (147 aa).

Residues 97 to 141 show a composition bias toward basic and acidic residues; it reads EEGPSAMMRKADRDRERDDRGGGFRGDREGGFRGDRGPRRPREEA. A disordered region spans residues 97–147; sequence EEGPSAMMRKADRDRERDDRGGGFRGDREGGFRGDRGPRRPREEAPAVVEE.

This sequence belongs to the bacterial ribosomal protein bS6 family.

Functionally, binds together with bS18 to 16S ribosomal RNA. In Nitrobacter hamburgensis (strain DSM 10229 / NCIMB 13809 / X14), this protein is Small ribosomal subunit protein bS6.